Consider the following 251-residue polypeptide: Octanoyltransferase (251 aa).

Residues 49–230 (DEIPDQLLIL…ALDDALAGRL (182 aa)) enclose the BPL/LPL catalytic domain. Substrate contacts are provided by residues 87 to 94 (RGGRITWH), 160 to 162 (AIG), and 173 to 175 (GVA). Cys-191 (acyl-thioester intermediate) is an active-site residue.

This sequence belongs to the LipB family.

It is found in the cytoplasm. It catalyses the reaction octanoyl-[ACP] + L-lysyl-[protein] = N(6)-octanoyl-L-lysyl-[protein] + holo-[ACP] + H(+). It participates in protein modification; protein lipoylation via endogenous pathway; protein N(6)-(lipoyl)lysine from octanoyl-[acyl-carrier-protein]: step 1/2. Catalyzes the transfer of endogenously produced octanoic acid from octanoyl-acyl-carrier-protein onto the lipoyl domains of lipoate-dependent enzymes. Lipoyl-ACP can also act as a substrate although octanoyl-ACP is likely to be the physiological substrate. This Corynebacterium glutamicum (strain R) protein is Octanoyltransferase.